A 337-amino-acid chain; its full sequence is Glyceraldehyde-3-phosphate dehydrogenase (337 aa).

NAD(+) is bound by residues 13–14 (RI), Asp35, and Arg80. D-glyceraldehyde 3-phosphate is bound by residues 151-153 (SCT), Thr182, 211-212 (TG), and Arg234. Cys152 acts as the Nucleophile in catalysis. Asn316 contributes to the NAD(+) binding site.

The protein belongs to the glyceraldehyde-3-phosphate dehydrogenase family. In terms of assembly, homotetramer.

The protein localises to the cytoplasm. It catalyses the reaction D-glyceraldehyde 3-phosphate + phosphate + NAD(+) = (2R)-3-phospho-glyceroyl phosphate + NADH + H(+). The protein operates within carbohydrate degradation; glycolysis; pyruvate from D-glyceraldehyde 3-phosphate: step 1/5. The polypeptide is Glyceraldehyde-3-phosphate dehydrogenase (GPD1) (Monascus purpureus (Red mold)).